The following is a 252-amino-acid chain: Phosphate import ATP-binding protein PstB 2 (252 aa).

The 242-residue stretch at 6-247 (ISINDLSVYF…PQHKETEDYI (242 aa)) folds into the ABC transporter domain. 38 to 45 (GPSGSGKS) lines the ATP pocket.

It belongs to the ABC transporter superfamily. Phosphate importer (TC 3.A.1.7) family. As to quaternary structure, the complex is composed of two ATP-binding proteins (PstB), two transmembrane proteins (PstC and PstA) and a solute-binding protein (PstS).

The protein resides in the cell membrane. It carries out the reaction phosphate(out) + ATP + H2O = ADP + 2 phosphate(in) + H(+). Part of the ABC transporter complex PstSACB involved in phosphate import. Responsible for energy coupling to the transport system. This is Phosphate import ATP-binding protein PstB 2 from Streptococcus thermophilus (strain CNRZ 1066).